Consider the following 141-residue polypeptide: Hemoglobin subunit beta-C (141 aa).

The Globin domain occupies 1-141; sequence PNKALITGFW…VASALAHRYH (141 aa). Heme b contacts are provided by His58 and His87.

It belongs to the globin family. Heterotetramer of two alpha chains and two beta chains. As to expression, red blood cells.

Involved in oxygen transport from the lung to the various peripheral tissues. This is Hemoglobin subunit beta-C (HBBC) from Ovis aries musimon (Mouflon).